The chain runs to 298 residues: Probable GTP 3',8-cyclase (298 aa).

Positions 4–227 (RYGREIRSFR…MQNRKKYLID (224 aa)) constitute a Radical SAM core domain. Residue arginine 13 participates in GTP binding. Residues cysteine 20 and cysteine 24 each contribute to the [4Fe-4S] cluster site. Tyrosine 26 contacts S-adenosyl-L-methionine. Cysteine 27 provides a ligand contact to [4Fe-4S] cluster. GTP is bound at residue lysine 61. Glycine 65 is a binding site for S-adenosyl-L-methionine. Threonine 91 serves as a coordination point for GTP. Position 115 (serine 115) interacts with S-adenosyl-L-methionine. Lysine 152 serves as a coordination point for GTP. [4Fe-4S] cluster is bound by residues cysteine 243 and cysteine 246. 248-250 (RIR) is a binding site for GTP. Cysteine 260 is a binding site for [4Fe-4S] cluster.

It belongs to the radical SAM superfamily. MoaA family. It depends on [4Fe-4S] cluster as a cofactor.

The catalysed reaction is GTP + AH2 + S-adenosyl-L-methionine = (8S)-3',8-cyclo-7,8-dihydroguanosine 5'-triphosphate + 5'-deoxyadenosine + L-methionine + A + H(+). Its pathway is cofactor biosynthesis; molybdopterin biosynthesis. In terms of biological role, catalyzes the cyclization of GTP to (8S)-3',8-cyclo-7,8-dihydroguanosine 5'-triphosphate. The polypeptide is Probable GTP 3',8-cyclase (Methanococcus maripaludis (strain C5 / ATCC BAA-1333)).